Here is a 434-residue protein sequence, read N- to C-terminus: 4-hydroxyphenylpyruvate dioxygenase (434 aa).

Residues 1–21 (MPPTPTTPAATGAAAAVTPEH) are disordered. Positions 7–19 (TPAATGAAAAVTP) are enriched in low complexity. VOC domains are found at residues 41-192 (SFHH…FLPG) and 208-368 (RFDH…IFTK). Fe cation-binding residues include histidine 211, histidine 293, and glutamate 379.

This sequence belongs to the 4HPPD family. Fe cation is required as a cofactor.

Its subcellular location is the cytoplasm. It catalyses the reaction 3-(4-hydroxyphenyl)pyruvate + O2 = homogentisate + CO2. The protein operates within amino-acid degradation; L-phenylalanine degradation; acetoacetate and fumarate from L-phenylalanine: step 3/6. It functions in the pathway cofactor biosynthesis; prenylquinone biosynthesis. The protein is 4-hydroxyphenylpyruvate dioxygenase of Hordeum vulgare (Barley).